We begin with the raw amino-acid sequence, 112 residues long: Protein ECM19 (112 aa).

A helical membrane pass occupies residues 35 to 57 (NTLDMVTIGIACLVGVYTGTRFF). The segment at 82–112 (EDGNLLKVTPSLSSTPAAPPTPPTPPTPPQQ) is disordered. Residues 98 to 112 (AAPPTPPTPPTPPQQ) are compositionally biased toward pro residues.

It is found in the mitochondrion membrane. In terms of biological role, may be involved in cell wall organization and biogenesis. The protein is Protein ECM19 (ECM19) of Saccharomyces cerevisiae (strain ATCC 204508 / S288c) (Baker's yeast).